Here is a 310-residue protein sequence, read N- to C-terminus: Protein N-terminal asparagine amidohydrolase (310 aa).

In terms of assembly, monomer.

It is found in the cytoplasm. It carries out the reaction N-terminal L-asparaginyl-[protein] + H2O + H(+) = N-terminal L-aspartyl-[protein] + NH4(+). N-terminal asparagine deamidase that mediates deamidation of N-terminal asparagine residues to aspartate. Required for the ubiquitin-dependent turnover of intracellular proteins that initiate with Met-Asn. These proteins are acetylated on the retained initiator methionine and can subsequently be modified by the removal of N-acetyl methionine by acylaminoacid hydrolase (AAH). Conversion of the resulting N-terminal asparagine to aspartate by NTAN1/PNAD renders the protein susceptible to arginylation, polyubiquitination and degradation as specified by the N-end rule. This enzyme does not act on substrates with internal or C-terminal asparagines and does not act on glutamine residues in any position. This chain is Protein N-terminal asparagine amidohydrolase, found in Mus musculus (Mouse).